Consider the following 282-residue polypeptide: HTH-type transcriptional activator RhaR (282 aa).

An HTH araC/xylS-type domain is found at 179–277 (DKLITALAGS…GMTPVQWRHR (99 aa)). 2 consecutive DNA-binding regions (H-T-H motif) follow at residues 196 to 217 (EKFCEQEQCSERALRQQFRTQT) and 244 to 267 (VSEVAMRCGFEDSNYFSVVFNREV).

As to quaternary structure, binds DNA as a dimer.

The protein resides in the cytoplasm. In terms of biological role, activates expression of the rhaSR operon in response to L-rhamnose. This Enterobacter sp. (strain 638) protein is HTH-type transcriptional activator RhaR.